A 232-amino-acid chain; its full sequence is Ubiquinone biosynthesis O-methyltransferase (232 aa).

4 residues coordinate S-adenosyl-L-methionine: Arg-36, Gly-55, Asp-76, and Leu-120.

This sequence belongs to the methyltransferase superfamily. UbiG/COQ3 family.

The catalysed reaction is a 3-demethylubiquinol + S-adenosyl-L-methionine = a ubiquinol + S-adenosyl-L-homocysteine + H(+). It carries out the reaction a 3-(all-trans-polyprenyl)benzene-1,2-diol + S-adenosyl-L-methionine = a 2-methoxy-6-(all-trans-polyprenyl)phenol + S-adenosyl-L-homocysteine + H(+). Its pathway is cofactor biosynthesis; ubiquinone biosynthesis. Functionally, O-methyltransferase that catalyzes the 2 O-methylation steps in the ubiquinone biosynthetic pathway. In Pseudomonas putida (strain ATCC 700007 / DSM 6899 / JCM 31910 / BCRC 17059 / LMG 24140 / F1), this protein is Ubiquinone biosynthesis O-methyltransferase.